The sequence spans 40 residues: Photosystem II reaction center protein J (40 aa).

The helical transmembrane segment at 8-28 (IPLWVVATIAGLGVITVVGIF) threads the bilayer.

It belongs to the PsbJ family. As to quaternary structure, PSII is composed of 1 copy each of membrane proteins PsbA, PsbB, PsbC, PsbD, PsbE, PsbF, PsbH, PsbI, PsbJ, PsbK, PsbL, PsbM, PsbT, PsbX, PsbY, PsbZ, Psb30/Ycf12, peripheral proteins PsbO, CyanoQ (PsbQ), PsbU, PsbV and a large number of cofactors. It forms dimeric complexes.

It is found in the cellular thylakoid membrane. Functionally, one of the components of the core complex of photosystem II (PSII). PSII is a light-driven water:plastoquinone oxidoreductase that uses light energy to abstract electrons from H(2)O, generating O(2) and a proton gradient subsequently used for ATP formation. It consists of a core antenna complex that captures photons, and an electron transfer chain that converts photonic excitation into a charge separation. The sequence is that of Photosystem II reaction center protein J from Nostoc sp. (strain PCC 7120 / SAG 25.82 / UTEX 2576).